The sequence spans 625 residues: Complex I assembly factor ACAD9, mitochondrial (625 aa).

Residues 1–41 (MSGYVLFSRGATAAAAAARASRVLRVFTERRRTLHTSLQSC) constitute a mitochondrion transit peptide. Lys45 is subject to N6-acetyllysine. Residue Lys96 is modified to N6-succinyllysine. Glu430 acts as the Proton acceptor in catalysis. Thr482 carries the phosphothreonine modification. The residue at position 525 (Lys525) is an N6-acetyllysine; alternate. Lys525 is modified (N6-succinyllysine; alternate).

It belongs to the acyl-CoA dehydrogenase family. As to quaternary structure, homodimer. Interacts with NDUFAF1 and ECSIT. Part of the mitochondrial complex I assembly/MCIA complex that comprises at least the core subunits TMEM126B, NDUFAF1, ECSIT and ACAD9 and complement subunits such as COA1 and TMEM186. Interacts with TMEM70 and TMEM242. Requires FAD as cofactor.

The protein resides in the mitochondrion inner membrane. It catalyses the reaction eicosanoyl-CoA + oxidized [electron-transfer flavoprotein] + H(+) = (2E)-eicosenoyl-CoA + reduced [electron-transfer flavoprotein]. It carries out the reaction octadecanoyl-CoA + oxidized [electron-transfer flavoprotein] + H(+) = (2E)-octadecenoyl-CoA + reduced [electron-transfer flavoprotein]. The catalysed reaction is oxidized [electron-transfer flavoprotein] + hexadecanoyl-CoA + H(+) = (2E)-hexadecenoyl-CoA + reduced [electron-transfer flavoprotein]. The enzyme catalyses decanoyl-CoA + oxidized [electron-transfer flavoprotein] + H(+) = (2E)-decenoyl-CoA + reduced [electron-transfer flavoprotein]. It catalyses the reaction nonanoyl-CoA + oxidized [electron-transfer flavoprotein] + H(+) = (2E)-nonenoyl-CoA + reduced [electron-transfer flavoprotein]. It carries out the reaction pentadecanoyl-CoA + oxidized [electron-transfer flavoprotein] + H(+) = (2E)-pentadecenoyl-CoA + reduced [electron-transfer flavoprotein]. The catalysed reaction is undecanoyl-CoA + oxidized [electron-transfer flavoprotein] + H(+) = trans-2-undecenoyl-CoA + reduced [electron-transfer flavoprotein]. The enzyme catalyses (9Z)-hexadecenoyl-CoA + oxidized [electron-transfer flavoprotein] + H(+) = (2E,9Z)-hexadecadienoyl-CoA + reduced [electron-transfer flavoprotein]. It catalyses the reaction heptadecanoyl-CoA + oxidized [electron-transfer flavoprotein] + H(+) = trans-2-heptadecenoyl-CoA + reduced [electron-transfer flavoprotein]. It carries out the reaction (9E)-octadecenoyl-CoA + oxidized [electron-transfer flavoprotein] + H(+) = (2E,9E)-octadecadienoyl-CoA + reduced [electron-transfer flavoprotein]. The catalysed reaction is oxidized [electron-transfer flavoprotein] + (9Z)-octadecenoyl-CoA + H(+) = (2E,9Z)-octadecadienoyl-CoA + reduced [electron-transfer flavoprotein]. The enzyme catalyses (9Z,12Z)-octadecadienoyl-CoA + oxidized [electron-transfer flavoprotein] + H(+) = (2E,9Z,12Z)-octadecatrienoyl-CoA + reduced [electron-transfer flavoprotein]. It catalyses the reaction (4Z,7Z,10Z,13Z,16Z,19Z)-docosahexaenoyl-CoA + oxidized [electron-transfer flavoprotein] + H(+) = (2E,4Z,7Z,10Z,13Z,16Z,19Z)-docosaheptaenoyl-CoA + reduced [electron-transfer flavoprotein]. It carries out the reaction tetradecanoyl-CoA + oxidized [electron-transfer flavoprotein] + H(+) = (2E)-tetradecenoyl-CoA + reduced [electron-transfer flavoprotein]. In terms of biological role, as part of the MCIA complex, primarily participates in the assembly of the mitochondrial complex I and therefore plays a role in oxidative phosphorylation. This moonlighting protein also has a dehydrogenase activity toward a broad range of substrates with greater specificity for long-chain unsaturated acyl-CoAs. However, in vivo, it does not seem to play a primary role in fatty acid oxidation. In addition, the function in complex I assembly is independent of the dehydrogenase activity of the protein. The chain is Complex I assembly factor ACAD9, mitochondrial from Rattus norvegicus (Rat).